The chain runs to 369 residues: 4-hydroxy-3-methylbut-2-en-1-yl diphosphate synthase (flavodoxin) (369 aa).

Positions 270, 273, 305, and 312 each coordinate [4Fe-4S] cluster.

Belongs to the IspG family. The cofactor is [4Fe-4S] cluster.

The catalysed reaction is (2E)-4-hydroxy-3-methylbut-2-enyl diphosphate + oxidized [flavodoxin] + H2O + 2 H(+) = 2-C-methyl-D-erythritol 2,4-cyclic diphosphate + reduced [flavodoxin]. It participates in isoprenoid biosynthesis; isopentenyl diphosphate biosynthesis via DXP pathway; isopentenyl diphosphate from 1-deoxy-D-xylulose 5-phosphate: step 5/6. In terms of biological role, converts 2C-methyl-D-erythritol 2,4-cyclodiphosphate (ME-2,4cPP) into 1-hydroxy-2-methyl-2-(E)-butenyl 4-diphosphate. In Pseudomonas putida (strain ATCC 700007 / DSM 6899 / JCM 31910 / BCRC 17059 / LMG 24140 / F1), this protein is 4-hydroxy-3-methylbut-2-en-1-yl diphosphate synthase (flavodoxin).